We begin with the raw amino-acid sequence, 334 residues long: Coiled-coil domain-containing protein 89 (334 aa).

The stretch at 75-318 (EAAQRFQSER…EAYKKHSGDL (244 aa)) forms a coiled coil.

This sequence belongs to the CCDC89 family. As to quaternary structure, interacts (via C-terminus) with hey1/bc8 (via Orange domain). In adults, expressed at varying levels in different organs including the liver and brain, with highest expression in the testis.

The protein localises to the cytoplasm. Its subcellular location is the nucleus. In Xenopus laevis (African clawed frog), this protein is Coiled-coil domain-containing protein 89.